Reading from the N-terminus, the 282-residue chain is MATYLIGDVHGCYDELIALLHKVEFTPGKDTLWLTGDLVARGPGSLDVLRYVKSLGDSVRLVLGNHDLHLLAVFAGISRNKPKDRLTPLLEAPDADELLNWLRRQPLLQIDKEKKLVMAHAGITPQWDLQTAKECARDVEAVLSSDSYPFFLDAMYGDMPNNWSPELRGLGRLRFITNAFTRMRFCFPNGQLDMYSKESPEEAPAPLKPWFAIPGPVAEEYNIAFGHWASLEGKGTPEGIYALDTGCCWGGTLTCLRWEDKQYFVQPSNRHKDLSEGEAVAS.

This sequence belongs to the Ap4A hydrolase family.

It carries out the reaction P(1),P(4)-bis(5'-adenosyl) tetraphosphate + H2O = 2 ADP + 2 H(+). Its function is as follows. Hydrolyzes diadenosine 5',5'''-P1,P4-tetraphosphate to yield ADP. The chain is Bis(5'-nucleosyl)-tetraphosphatase, symmetrical from Escherichia coli O45:K1 (strain S88 / ExPEC).